Here is a 212-residue protein sequence, read N- to C-terminus: Cyclin-dependent kinase inhibitor 3 (212 aa).

Residues 1–12 show a composition bias toward polar residues; that stretch reads MKPPSSIQTSEF. The interval 1-20 is disordered; the sequence is MKPPSSIQTSEFDSSDEEPI. The interaction with CDK2 stretch occupies residues 1–34; the sequence is MKPPSSIQTSEFDSSDEEPIEDEQTPIHISWLSL. The region spanning 33-201 is the Tyrosine-protein phosphatase domain; sequence SLSRVNCSQF…FRDKLAAHLS (169 aa). Residue Cys140 is the Phosphocysteine intermediate of the active site.

It belongs to the protein-tyrosine phosphatase family. Interacts with cyclin-dependent kinases such as CDK1, CDK2 and CDK3. Does not interact with CDK4. Interacts (via C-terminus) with phosphorylated CDK2 (via C-terminal helix). Interacts with MS4A3 (via C-terminus); the interaction enhances CDKN3 enzymatic activity.

Its subcellular location is the cytoplasm. It localises to the perinuclear region. It carries out the reaction O-phospho-L-tyrosyl-[protein] + H2O = L-tyrosyl-[protein] + phosphate. It catalyses the reaction O-phospho-L-threonyl-[protein] + H2O = L-threonyl-[protein] + phosphate. The catalysed reaction is O-phospho-L-seryl-[protein] + H2O = L-seryl-[protein] + phosphate. In terms of biological role, may play a role in cell cycle regulation. Dual specificity CC phosphatase active toward substrates containing either phosphotyrosine or phosphoserine residues. Dephosphorylates CDK2 at 'Thr-160' in a cyclin-dependent manner. The protein is Cyclin-dependent kinase inhibitor 3 of Homo sapiens (Human).